Reading from the N-terminus, the 228-residue chain is Uracil-DNA glycosylase (228 aa).

The active-site Proton acceptor is Asp71.

The protein belongs to the uracil-DNA glycosylase (UDG) superfamily. UNG family.

It is found in the cytoplasm. The enzyme catalyses Hydrolyzes single-stranded DNA or mismatched double-stranded DNA and polynucleotides, releasing free uracil.. In terms of biological role, excises uracil residues from the DNA which can arise as a result of misincorporation of dUMP residues by DNA polymerase or due to deamination of cytosine. The sequence is that of Uracil-DNA glycosylase from Thermobifida fusca (strain YX).